A 548-amino-acid polypeptide reads, in one-letter code: Pentatricopeptide repeat-containing protein At1g62680, mitochondrial (548 aa).

Residues 1–43 (MQRSIAMTAKRFLHRNLLENGKPRTASSPSFSHCSSCRCWVRA) constitute a mitochondrion transit peptide. PPR repeat units lie at residues 84-118 (SIVD…GIRN), 119-153 (DLYT…GYEP), 154-188 (DRVT…GYKP), 189-223 (DIVA…GIRP), 224-258 (NVVT…KITP), 259-293 (NVIT…SIDP), 294-328 (DIVT…GCLA), 329-363 (DVVS…GLVS), 364-398 (NTVT…GISP), 399-433 (DIWT…EMDL), 434-468 (DIVT…GLKP), and 469-503 (DIVT…GLMK).

The protein belongs to the PPR family. P subfamily.

Its subcellular location is the mitochondrion. In Arabidopsis thaliana (Mouse-ear cress), this protein is Pentatricopeptide repeat-containing protein At1g62680, mitochondrial.